We begin with the raw amino-acid sequence, 103 residues long: MYAIIRDRGMQYRVEPGQVLTIDLLKAEPGSQIELGEVLLVGNGEQVKIGSPLVEGAVVRAEVLGEKKGEKIVVFRYRNKTRYRRRTGHRQRYTQIRISEIVA.

The protein belongs to the bacterial ribosomal protein bL21 family. Part of the 50S ribosomal subunit. Contacts protein L20.

This protein binds to 23S rRNA in the presence of protein L20. This Chloroflexus aggregans (strain MD-66 / DSM 9485) protein is Large ribosomal subunit protein bL21.